We begin with the raw amino-acid sequence, 96 residues long: ATP-dependent Clp protease adapter protein ClpS (96 aa).

Belongs to the ClpS family. As to quaternary structure, binds to the N-terminal domain of the chaperone ClpA.

In terms of biological role, involved in the modulation of the specificity of the ClpAP-mediated ATP-dependent protein degradation. The polypeptide is ATP-dependent Clp protease adapter protein ClpS (Streptomyces coelicolor (strain ATCC BAA-471 / A3(2) / M145)).